Consider the following 258-residue polypeptide: Short-chain dehydrogenase chyC (258 aa).

R37, D55, N81, Y154, K158, V185, and T187 together coordinate NADP(+). Catalysis depends on Y154, which acts as the Proton donor. Residue K158 is the Lowers pKa of active site Tyr of the active site.

It belongs to the short-chain dehydrogenases/reductases (SDR) family.

Short-chain dehydrogenase; part of the gene cluster that mediates the biosynthesis of the yellow pigment chrysogine. the NRPS chyA mediates the condensation of anthranilic acid and alanine into the intermediate 2-(2-aminopropanamido)benzoic acid. The remainder of the pathway is highly branched yielding at least 13 chrysogine-related compounds. The malonyl transferase chyE converts 2-(2-aminopropanamido)benzoic acid and 2-(2-aminopropanamido)benzamidine into 2-(2-(2-carboxyacetamido)propanamido)benzoic acid and 3-((1-((2-carbamoylphenyl)amino)-1-oxopropan-2-yl)amino)-3-oxopropanoic acid, respectively. ChyD is an amidase, being responsible for the amidation of the carboxylic acid moiety of 2-(2-aminopropanamido)benzoic acid, 2-(2-(2-carboxyacetamido)propanamido)benzoic acid and 2-(2-((4-amino-1-carboxy-4-oxobutyl)amino)propanamido)benzoic acid. ChyC is involved in the same reactions as ChyD, but plays a more minor role in the amidation reactions compared to chyD. The oxidoreductases chyH and chyM are involved in oxidation reactions that form N-pyruvoylanthranilamide from 2-(2-aminopropanamido)benzamidine and (1-((2-carbamoylphenyl)amino)-1-oxopropan-2-yl)glutamine, respectively. N-pyruvoylanthranilamide is further converted via two further branches in the pathway, yielding chrysogine and additional chrysogine-related coumpounds. Chrysogine is likely formed by a spontaneous ring closure from N-pyruvoylanthranilamide. This is Short-chain dehydrogenase chyC from Penicillium rubens (strain ATCC 28089 / DSM 1075 / NRRL 1951 / Wisconsin 54-1255) (Penicillium chrysogenum).